Consider the following 284-residue polypeptide: Steroidogenic acute regulatory protein, mitochondrial (284 aa).

Residues 1–62 (MFLATFKLCA…RRSSLLGSQL (62 aa)) constitute a mitochondrion transit peptide. 2 positions are modified to phosphoserine; by PKA: S56 and S194. An START domain is found at 66 to 279 (LYSDQELSYI…LRKRLEASPA (214 aa)).

May interact with TSPO. Expressed within glia and neurons in discrete regions of the brain.

The protein localises to the mitochondrion. It carries out the reaction cholesterol(in) = cholesterol(out). It participates in steroid metabolism; cholesterol metabolism. Plays a key role in steroid hormone synthesis by enhancing the metabolism of cholesterol into pregnenolone. Transporter that binds to and transport cholesterol through the intermembrane space of the mitochondrion. This Mus musculus (Mouse) protein is Steroidogenic acute regulatory protein, mitochondrial (Star).